A 96-amino-acid polypeptide reads, in one-letter code: MFIVKAEIRDKKGKSFSRKLRIEDKFPGVLYGFNNTPISITMDHNLVFNLQKKEDFYKETLCLLIKEKKYTVKVHAIQRHAFKMKILHIDFIYAKI.

Belongs to the bacterial ribosomal protein bL25 family. Part of the 50S ribosomal subunit; part of the 5S rRNA/L5/L18/L25 subcomplex. Contacts the 5S rRNA. Binds to the 5S rRNA independently of L5 and L18.

This is one of the proteins that binds to the 5S RNA in the ribosome where it forms part of the central protuberance. The protein is Large ribosomal subunit protein bL25 of Buchnera aphidicola subsp. Schizaphis graminum (strain Sg).